The primary structure comprises 429 residues: Adenylosuccinate synthetase (429 aa).

Residues 13–19 (GDEGKGK) and 41–43 (GHT) contribute to the GTP site. Aspartate 14 acts as the Proton acceptor in catalysis. Mg(2+) contacts are provided by aspartate 14 and glycine 41. Residues 14-17 (DEGK), 39-42 (NAGH), threonine 130, arginine 144, glutamine 224, threonine 239, and arginine 303 each bind IMP. Histidine 42 serves as the catalytic Proton donor. 299-305 (ATTGRAR) contributes to the substrate binding site. GTP contacts are provided by residues arginine 305, 331-333 (KLD), and 412-414 (STG).

Belongs to the adenylosuccinate synthetase family. Homodimer. Requires Mg(2+) as cofactor.

It localises to the cytoplasm. It catalyses the reaction IMP + L-aspartate + GTP = N(6)-(1,2-dicarboxyethyl)-AMP + GDP + phosphate + 2 H(+). The protein operates within purine metabolism; AMP biosynthesis via de novo pathway; AMP from IMP: step 1/2. Its function is as follows. Plays an important role in the de novo pathway of purine nucleotide biosynthesis. Catalyzes the first committed step in the biosynthesis of AMP from IMP. The chain is Adenylosuccinate synthetase from Psychrobacter cryohalolentis (strain ATCC BAA-1226 / DSM 17306 / VKM B-2378 / K5).